We begin with the raw amino-acid sequence, 483 residues long: MTGKATSEASVSTPEETAPEPAKVPTTEPSGEVAASESTGQEQAPEPQKPQAQDPAAPAASAMPAATKPEPPSEDVPSAPLRLTLEDVSHSSLTVSWEPPEKLGKLGLQGYVLEFCREGASEWVPVNPRPVMVTQQTVRNLALGDKFFLRVTAVSSAGAGPPAVLDQPVHIQEITEAPKIRVPRHLRQTYIRQVGESVNLQIPFQGKPKPQVSWTHNGHALDNQRVNVRSGDQDSILFIRSAQRADSGRYELTVHLEGLEAKASIDILVIEKPGPPSSIKLLDVWGCNAALEWTPPQDTGNTELLGYTVQKADKRTGQWFTVLERYHPTTCTISDLIIGNSYSFRVFSENLCGLSDLATTTKELAHIHKADITAKPREFIERDFSEAPSFTQPLADHTSTPGYSTQLFCSVRASPKPKIIWMKNKMDIQGDPKYRAVSEQGVCTLEIRKPSPFDSGVYTCKAINVLGEASVDCRLEVKASATH.

Polar residues predominate over residues 1-15 (MTGKATSEASVSTPE). The interval 1-78 (MTGKATSEAS…PEPPSEDVPS (78 aa)) is disordered. Phosphothreonine occurs at positions 2, 6, and 26. Over residues 41-66 (QEQAPEPQKPQAQDPAAPAASAMPAA) the composition is skewed to low complexity. The Fibronectin type-III 1 domain maps to 79–174 (APLRLTLEDV…LDQPVHIQEI (96 aa)). Positions 178-266 (PKIRVPRHLR…EGLEAKASID (89 aa)) constitute an Ig-like C2-type 1 domain. One can recognise a Fibronectin type-III 2 domain in the interval 275–370 (PPSSIKLLDV…TKELAHIHKA (96 aa)). Residues 388-472 (PSFTQPLADH…INVLGEASVD (85 aa)) enclose the Ig-like C2-type 2 domain.

Belongs to the immunoglobulin superfamily. MyBP family. Skeletal muscle. Expressed at low levels in heart ventricles.

Functionally, binds to myosin; probably involved in interaction with thick myofilaments in the A-band. In Mus musculus (Mouse), this protein is Myosin-binding protein H (Mybph).